A 193-amino-acid chain; its full sequence is GTP cyclohydrolase 1 (193 aa).

Cys83, His86, and Cys154 together coordinate Zn(2+).

This sequence belongs to the GTP cyclohydrolase I family. In terms of assembly, homomer.

The enzyme catalyses GTP + H2O = 7,8-dihydroneopterin 3'-triphosphate + formate + H(+). Its pathway is cofactor biosynthesis; 7,8-dihydroneopterin triphosphate biosynthesis; 7,8-dihydroneopterin triphosphate from GTP: step 1/1. This chain is GTP cyclohydrolase 1, found in Porphyromonas gingivalis (strain ATCC 33277 / DSM 20709 / CIP 103683 / JCM 12257 / NCTC 11834 / 2561).